The chain runs to 170 residues: Protein SprT (170 aa).

The region spanning 22-163 (LQQANLTLQT…RCRRCGKTLR (142 aa)) is the SprT-like domain. Histidine 78 is a binding site for Zn(2+). Residue glutamate 79 is part of the active site. A Zn(2+)-binding site is contributed by histidine 82.

Belongs to the SprT family. Requires Zn(2+) as cofactor.

The protein resides in the cytoplasm. The protein is Protein SprT of Pectobacterium carotovorum subsp. carotovorum (strain PC1).